The primary structure comprises 370 residues: Protein Brevis radix-like 3 (370 aa).

The BRX 1 domain maps to 140 to 221 (KEWVAQVEPG…NFEKVMELYN (82 aa)). Composition is skewed to polar residues over residues 231-248 (LQTP…QSVK) and 266-291 (PGSS…SSID). Residues 231 to 316 (LQTPPVSEDG…VSNASDMESE (86 aa)) form a disordered region. The region spanning 315–370 (SEWVEQDEPGIYITIRALPDGNRELRRVRFSRDKFGETHARLWWEQNRARIQQQYL) is the BRX 2 domain.

It belongs to the BRX family. In terms of tissue distribution, expressed in roots.

Its subcellular location is the nucleus. The polypeptide is Protein Brevis radix-like 3 (BRXL3) (Arabidopsis thaliana (Mouse-ear cress)).